Here is a 267-residue protein sequence, read N- to C-terminus: PF03932 family protein CutC (267 aa).

Belongs to the CutC family.

It is found in the cytoplasm. In Xylella fastidiosa (strain Temecula1 / ATCC 700964), this protein is PF03932 family protein CutC.